The primary structure comprises 374 residues: MVNQAAMPLLTPYKQAGGKIDLSHRVLLSPMTRCRSYGNVPQPHAALYYTQRATSGGLLITEATGVSDTAQGYPETPGVWTREHVEAWKPIVDAVHRKGALFICQLWHVGRVSTNDYQPNGQAPISSSDIQITPDGSGIVYSKPRRLRVDEIPQIVDDFRLAARNAIEAGFDGVEIHGANGYLLEQFMKDSSNDRTDEYGGSLENRCRFAVEVIDAVVGEIGAHRVGIRLSPFLDFMDCVDSDPEALGSYMVEQLNKHEGFLYCHMVEPRMAIVDGRRQIQHGLLPFRKAFKGTFIAAGGYDREEGNKVIENGYTDLVSFGRLFLANPDLPKRFELDAPLNKYDRNTFYTQDPIVGYTDYPFLDEDQNNSVADA.

FMN contacts are provided by residues 30–32 (PMT), A63, and Q105. 177–180 (HGAN) serves as a coordination point for substrate. The active-site Proton donor is the Y182. FMN is bound at residue R229. R270 lines the substrate pocket. FMN-binding positions include G300 and 321-322 (GR).

It belongs to the NADH:flavin oxidoreductase/NADH oxidase family. Requires FMN as cofactor.

Functionally, putative oxophytodienoate reductase that may be involved in the biosynthesis or metabolism of oxylipin signaling molecules. The polypeptide is Putative 12-oxophytodienoate reductase 5 (OPR5) (Oryza sativa subsp. japonica (Rice)).